A 146-amino-acid chain; its full sequence is Globin (146 aa).

An N-acetylalanine modification is found at A1. The region spanning 1 to 146 (ALSAAEAEVV…IIDAMKKAGK (146 aa)) is the Globin domain. H95 contributes to the heme b binding site.

Belongs to the globin family. Monomer.

The sequence is that of Globin from Dolabella auricularia (Shoulderblade sea cat).